The chain runs to 148 residues: Histone H2B.1 (148 aa).

The segment covering 1–35 (MAPRAEKKPAEKKTAAERPVEENKAAEKAPAEKKP) has biased composition (basic and acidic residues). The segment at 1–56 (MAPRAEKKPAEKKTAAERPVEENKAAEKAPAEKKPKAGKKLPPKEAGDKKKKRSKK) is disordered. At Ala-2 the chain carries N,N,N-trimethylalanine; alternate. Residue Ala-2 is modified to N,N-dimethylalanine; alternate. Ala-2 is modified (N-methylalanine; alternate). Lys-7 carries the post-translational modification N6-acetyllysine; partial. Lys-12 is subject to N6-acetyllysine. Position 13 is an N6,N6-dimethyllysine (Lys-13). 3 positions are modified to N6-acetyllysine: Lys-28, Lys-33, and Lys-39. Lys-40 is subject to N6-acetyllysine; partial. Lys-144 is covalently cross-linked (Glycyl lysine isopeptide (Lys-Gly) (interchain with G-Cter in ubiquitin)).

Belongs to the histone H2B family. In terms of assembly, the nucleosome is a histone octamer containing two molecules each of H2A, H2B, H3 and H4 assembled in one H3-H4 heterotetramer and two H2A-H2B heterodimers. The octamer wraps approximately 147 bp of DNA. Interacts with AHL27. Post-translationally, can be acetylated to form H2BK6ac, H2BK33ac and H2BK34ac. In terms of processing, mono-, di- or trimethylated at the N-terminus to form H2BA1me1/2/3. H2BA1me2 may be acetylated to form H2BA1me2K6ac. Monoubiquitinated by BRE1 to form H2BK143ub1 and deubiquitinated by UBP26. Required for heterochromatic histone H3 di- and trimethylation at H3K4me. May give a specific tag for epigenetic transcriptional activation.

Its subcellular location is the nucleus. It is found in the chromosome. Its function is as follows. Core component of nucleosome. Nucleosomes wrap and compact DNA into chromatin, limiting DNA accessibility to the cellular machineries which require DNA as a template. Histones thereby play a central role in transcription regulation, DNA repair, DNA replication and chromosomal stability. DNA accessibility is regulated via a complex set of post-translational modifications of histones, also called histone code, and nucleosome remodeling. The chain is Histone H2B.1 from Arabidopsis thaliana (Mouse-ear cress).